The sequence spans 320 residues: MQTRNTLSWIREEITRSISVSLMIYIITWASISSAYPIFAQQNYENPREATGRIVCANCHLANKPVDIEVPQTVLPDTVFEAVVKIPYDMQLKQVLANGKKGALNVGAVLILPEGFELAPPDRISPEIKEKIGTLSFQNYRPNKKNILVIGPVPGQKYSEITFPILAPDPATNKDVHFLKYPIYVGGNRGRGQIYPDGSKSNNTVYNATTGGIISKILRKEKGGYEITIVDASNGREVIDIIPRGLELLVSEGESIKLDQPLTSNPNVGGFGQGDAEIVLQDPLRVQGLLFFLGSVVLAQIFLVLKKKQFEKVQLSEMNF.

The N-terminal stretch at 1–35 (MQTRNTLSWIREEITRSISVSLMIYIITWASISSA) is a signal peptide. Heme-binding residues include tyrosine 36, cysteine 56, cysteine 59, and histidine 60. The helical transmembrane segment at 286–306 (VQGLLFFLGSVVLAQIFLVLK) threads the bilayer.

Belongs to the cytochrome f family. As to quaternary structure, the 4 large subunits of the cytochrome b6-f complex are cytochrome b6, subunit IV (17 kDa polypeptide, petD), cytochrome f and the Rieske protein, while the 4 small subunits are PetG, PetL, PetM and PetN. The complex functions as a dimer. It depends on heme as a cofactor.

Its subcellular location is the plastid. It is found in the chloroplast thylakoid membrane. In terms of biological role, component of the cytochrome b6-f complex, which mediates electron transfer between photosystem II (PSII) and photosystem I (PSI), cyclic electron flow around PSI, and state transitions. The sequence is that of Cytochrome f from Olimarabidopsis pumila (Dwarf rocket).